A 372-amino-acid polypeptide reads, in one-letter code: MMMSDLSLDLVEEILSRVPATSLKRLRSTCKLWNALFKNPGFTKKQFLKAPKESLVLMLKEYSVCPMIANLSVSAPSIEFKGALNLKNYPPYSEEVDIHEACHCDGLLLCTTMDYRIVVWNPCLGETRWIRWPKNIYSRFALGYEKNKYGRIYKILRCWDRHNSPTGRVDEFEIYEFSSDSWRVLDLVALDCHIASHIGVSFKGNTYWLASDKKDKYGLLLCFDFTTERFTRLCLPPSQDVSKMALSVVGGKQLSLLSQSDSTSKIMEMWVTNIIEDVLMWSKSFTVDIPIRGDYCPYLTSYLVDEEKKVAVCYNENFEKSNKKVYIIGEDNGYYTEIPLVESSYQVWGYPIIFNYVPSLVQIEEGGCIIKE.

One can recognise an F-box domain in the interval 1–50 (MMMSDLSLDLVEEILSRVPATSLKRLRSTCKLWNALFKNPGFTKKQFLKA). Kelch repeat units follow at residues 155–204 (ILRC…SFKG), 245–293 (ALSV…PIRG), and 324–372 (KVYI…IIKE).

The polypeptide is Putative F-box/kelch-repeat protein At3g22730 (Arabidopsis thaliana (Mouse-ear cress)).